The following is a 392-amino-acid chain: L-rhamnonate dehydratase (392 aa).

His22 and Arg48 together coordinate substrate. The Mg(2+) site is built by Asp214, Glu240, and Glu268. The active-site Proton acceptor is His318. Glu338 lines the substrate pocket.

Belongs to the mandelate racemase/muconate lactonizing enzyme family. RhamD subfamily. As to quaternary structure, homooctamer; tetramer of dimers. The cofactor is Mg(2+).

The catalysed reaction is L-rhamnonate = 2-dehydro-3-deoxy-L-rhamnonate + H2O. Its function is as follows. Catalyzes the dehydration of L-rhamnonate to 2-keto-3-deoxy-L-rhamnonate (KDR). The polypeptide is L-rhamnonate dehydratase (Burkholderia ambifaria (strain MC40-6)).